The following is a 221-amino-acid chain: 7-cyano-7-deazaguanine synthase (221 aa).

9 to 19 (YSGGMDSFTVL) lines the ATP pocket. The Zn(2+) site is built by Cys186, Cys194, Cys197, and Cys200.

The protein belongs to the QueC family. It depends on Zn(2+) as a cofactor.

It catalyses the reaction 7-carboxy-7-deazaguanine + NH4(+) + ATP = 7-cyano-7-deazaguanine + ADP + phosphate + H2O + H(+). It participates in purine metabolism; 7-cyano-7-deazaguanine biosynthesis. Functionally, catalyzes the ATP-dependent conversion of 7-carboxy-7-deazaguanine (CDG) to 7-cyano-7-deazaguanine (preQ(0)). This Psychromonas ingrahamii (strain DSM 17664 / CCUG 51855 / 37) protein is 7-cyano-7-deazaguanine synthase.